Reading from the N-terminus, the 155-residue chain is Ribosomal RNA large subunit methyltransferase H (155 aa).

S-adenosyl-L-methionine contacts are provided by Leu72 and Gly104.

The protein belongs to the RNA methyltransferase RlmH family. Homodimer.

The protein resides in the cytoplasm. The enzyme catalyses pseudouridine(1915) in 23S rRNA + S-adenosyl-L-methionine = N(3)-methylpseudouridine(1915) in 23S rRNA + S-adenosyl-L-homocysteine + H(+). Specifically methylates the pseudouridine at position 1915 (m3Psi1915) in 23S rRNA. This chain is Ribosomal RNA large subunit methyltransferase H, found in Fusobacterium nucleatum subsp. nucleatum (strain ATCC 25586 / DSM 15643 / BCRC 10681 / CIP 101130 / JCM 8532 / KCTC 2640 / LMG 13131 / VPI 4355).